Reading from the N-terminus, the 432-residue chain is Adenylosuccinate synthetase (432 aa).

Residues 13 to 19 and 41 to 43 contribute to the GTP site; these read GDEGKGK and GHT. D14 acts as the Proton acceptor in catalysis. Mg(2+) is bound by residues D14 and G41. Residues 14–17, 39–42, T130, R144, Q225, T240, and R304 each bind IMP; these read DEGK and NAGH. H42 (proton donor) is an active-site residue. 300–306 is a binding site for substrate; the sequence is AVTGRPR. GTP is bound by residues R306, 332–334, and 415–417; these read KLD and STG.

Belongs to the adenylosuccinate synthetase family. Homodimer. Mg(2+) serves as cofactor.

Its subcellular location is the cytoplasm. It catalyses the reaction IMP + L-aspartate + GTP = N(6)-(1,2-dicarboxyethyl)-AMP + GDP + phosphate + 2 H(+). Its pathway is purine metabolism; AMP biosynthesis via de novo pathway; AMP from IMP: step 1/2. Its function is as follows. Plays an important role in the de novo pathway of purine nucleotide biosynthesis. Catalyzes the first committed step in the biosynthesis of AMP from IMP. This chain is Adenylosuccinate synthetase, found in Haemophilus ducreyi (strain 35000HP / ATCC 700724).